Reading from the N-terminus, the 204-residue chain is Urease accessory protein UreG (204 aa).

A GTP-binding site is contributed by Gly-12 to Thr-19.

The protein belongs to the SIMIBI class G3E GTPase family. UreG subfamily. Homodimer. UreD, UreF and UreG form a complex that acts as a GTP-hydrolysis-dependent molecular chaperone, activating the urease apoprotein by helping to assemble the nickel containing metallocenter of UreC. The UreE protein probably delivers the nickel.

It is found in the cytoplasm. Its function is as follows. Facilitates the functional incorporation of the urease nickel metallocenter. This process requires GTP hydrolysis, probably effectuated by UreG. The sequence is that of Urease accessory protein UreG from Streptococcus salivarius (strain 57.I).